Consider the following 500-residue polypeptide: Probable cytosol aminopeptidase (500 aa).

Positions 265 and 270 each coordinate Mn(2+). Lysine 277 is a catalytic residue. Mn(2+) is bound by residues aspartate 288, aspartate 347, and glutamate 349. Arginine 351 is an active-site residue.

Belongs to the peptidase M17 family. It depends on Mn(2+) as a cofactor.

It is found in the cytoplasm. It carries out the reaction Release of an N-terminal amino acid, Xaa-|-Yaa-, in which Xaa is preferably Leu, but may be other amino acids including Pro although not Arg or Lys, and Yaa may be Pro. Amino acid amides and methyl esters are also readily hydrolyzed, but rates on arylamides are exceedingly low.. The enzyme catalyses Release of an N-terminal amino acid, preferentially leucine, but not glutamic or aspartic acids.. Presumably involved in the processing and regular turnover of intracellular proteins. Catalyzes the removal of unsubstituted N-terminal amino acids from various peptides. The polypeptide is Probable cytosol aminopeptidase (Corynebacterium diphtheriae (strain ATCC 700971 / NCTC 13129 / Biotype gravis)).